The chain runs to 44 residues: Cytochrome b559 subunit beta (44 aa).

A helical membrane pass occupies residues 19–35 (WLAIHGIAIPTVFFLGA). Residue H23 participates in heme binding.

Belongs to the PsbE/PsbF family. Heterodimer of an alpha subunit and a beta subunit. PSII is composed of 1 copy each of membrane proteins PsbA, PsbB, PsbC, PsbD, PsbE, PsbF, PsbH, PsbI, PsbJ, PsbK, PsbL, PsbM, PsbT, PsbX, PsbY, PsbZ, Psb30/Ycf12, at least 3 peripheral proteins of the oxygen-evolving complex and a large number of cofactors. It forms dimeric complexes. Heme b serves as cofactor.

The protein resides in the plastid. It is found in the chloroplast thylakoid membrane. Its function is as follows. This b-type cytochrome is tightly associated with the reaction center of photosystem II (PSII). PSII is a light-driven water:plastoquinone oxidoreductase that uses light energy to abstract electrons from H(2)O, generating O(2) and a proton gradient subsequently used for ATP formation. It consists of a core antenna complex that captures photons, and an electron transfer chain that converts photonic excitation into a charge separation. The protein is Cytochrome b559 subunit beta of Gracilaria tenuistipitata var. liui (Red alga).